A 286-amino-acid polypeptide reads, in one-letter code: Large ribosomal subunit protein uL3 (286 aa).

At Q152 the chain carries N5-methylglutamine. Residues 246–265 (EAAAAAAAAEEQAAMEAAEA) are compositionally biased toward low complexity. The tract at residues 246–286 (EAAAAAAAAEEQAAMEAAEAAEAKTDTVAEAEAAEKKEGDA) is disordered. Over residues 266–286 (AEAKTDTVAEAEAAEKKEGDA) the composition is skewed to basic and acidic residues.

The protein belongs to the universal ribosomal protein uL3 family. As to quaternary structure, part of the 50S ribosomal subunit. Forms a cluster with proteins L14 and L19. Methylated by PrmB.

Functionally, one of the primary rRNA binding proteins, it binds directly near the 3'-end of the 23S rRNA, where it nucleates assembly of the 50S subunit. In Roseobacter denitrificans (strain ATCC 33942 / OCh 114) (Erythrobacter sp. (strain OCh 114)), this protein is Large ribosomal subunit protein uL3.